We begin with the raw amino-acid sequence, 751 residues long: Nibrin (751 aa).

The 60-residue stretch at 24–83 folds into the FHA domain; it reads YVVGRKNCGILIENDQSISRNHAVLTVNFPVTSLSQTDEIPTLTIKDNSKYGTFVNEEKM. 2 consecutive BRCT domains span residues 105-181 and 224-315; these read KFRV…SEFL and GKTF…LAVI. The tract at residues 111 to 328 is mediates interaction with SP100; it reads EPLVVCSSCL…TENYCNPQGQ (218 aa). The interval 221–403 is interaction with MTOR, MAPKAP1 and RICTOR; sequence IFKGKTFVFL…SRKLSQETFN (183 aa). Position 337 is a phosphothreonine (Thr337). Residue Ser343 is modified to Phosphoserine; by ATM. A phosphoserine mark is found at Ser347 and Ser398. Residues 389-418 form a disordered region; the sequence is GLEQSSRKLSQETFNIKEAPKPSSKANNVA. Ser433 carries the post-translational modification Phosphoserine; by CDK2. A Glycyl lysine isopeptide (Lys-Gly) (interchain with G-Cter in ubiquitin) cross-link involves residue Lys436. Disordered stretches follow at residues 444–479 and 491–550; these read KDWT…SSCK and EQTQ…RKRK. Positions 446–457 are enriched in polar residues; sequence WTSQQQQNSIKN. The short motif at 461-467 is the Nuclear localization signal element; sequence PCTRKRE. 2 stretches are compositionally biased toward basic and acidic residues: residues 502 to 518 and 528 to 539; these read KSKE…READ and ELNRKSPDRKPL. Ser508 is subject to Phosphoserine. Residues Lys569 and Lys580 each participate in a glycyl lysine isopeptide (Lys-Gly) (interchain with G-Cter in SUMO2) cross-link. Residues 576 to 645 are disordered; sequence VKVEKQEADD…ANSDGLQDSS (70 aa). Basic and acidic residues-rich tracts occupy residues 577 to 599 and 615 to 636; these read KVEK…ERNR and EDER…HEIA. Glycyl lysine isopeptide (Lys-Gly) (interchain with G-Cter in ubiquitin) cross-links involve residues Lys684, Lys688, and Lys733. The segment covering 731-742 has biased composition (basic and acidic residues); sequence QAKEESLADDLF. Residues 731-751 form a disordered region; that stretch reads QAKEESLADDLFRYNPNVKRR. Residues 738–747 carry the FxF/Y motif motif; the sequence is ADDLFRYNPN.

Belongs to the Nibrin family. Component of the MRN complex composed of two heterodimers RAD50 and MRE11 associated with a single NBN. The MRN complexes dimerize on DNA to form joined MRN-MRN oligomers required for DNA double-strand break repair. As part of the MRN complex, interacts with MCM9; the interaction recruits the complex to DNA repair sites. Component of the BASC complex, at least composed of BRCA1, MSH2, MSH6, MLH1, ATM, BLM, RAD50, MRE11 and NBN. Interacts with histone H2AX; this requires phosphorylation of H2AX on 'Ser-139' and promotes NBN recruitment to DNA damage sites. Interacts with (phosphorylated) MDC1; promoting NBN recruitment to DNA damage sites. Interacts with (phosphorylated) RAD17; promoting NBN recruitment to DNA damage sites. Interacts (via FxF/Y motif) with ATM. Interacts with HJURP. Interacts with INTS3. Interacts with KPNA2. Interacts with TERF2; interaction is disrupted upon NBN phosphorylation by CDK2. Interacts with (phosphorylated) RBBP8/CtIP; the interaction links the role of the MRN complex in DNA double-strand break sensing to resection. Interacts with SP100; recruits NBN to PML bodies. Interacts with ATF2. Interacts with MTOR, MAPKAP1 isoform 2 and RICTOR; indicative for an association with the mTORC2 complex. Interacts with MRNIP. Interacts with UFL1; promoting UFL1 recruitment to double-strand breaks following DNA damage. Interacts with CYREN (via XLF motif). Ubiquitinated at Lys-436 via 'Lys-6'-linked ubiquitin chains by RNF8, promoting NBN recruitment to DNA double-strand breaks (DSBs). Ubiquitinated at Lys-684 and Lys-688 via 'Lys-63'-linked ubiquitin chains by PELI1: ubiquitination takes place following PELI1 phosphorylation and promotes ATM activation and DNA repair. Ubiquitinated at Lys-733 via 'Lys-63'-linked ubiquitin chains by the SCF(SKP2) complex: ubiquitination takes place following SKP2 phosphorylation and promotes ATM activation and DNA repair. Post-translationally, phosphorylated by ATM in response of ionizing radiation, and such phosphorylation is responsible intra-S phase checkpoint control and telomere maintenance. Phosphorylated at Ser-433 by CDK2 in S/G2 phases abolishes interaction with TERF2, enabling DCLRE1B/Apollo recruitment to telomeres. Phosphorylation at Ser-433 in response to dysfunctional telomeres promotes non-homologous end joining repair at telomeres, while dephosphorylation by PPP1CA promotes microhomology-mediated end-joining (MMEJ) repair. As to expression, high expression in the liver, heart and testis. Low expression in all other tissues analyzed. In the cerebellum the postmitotic Purkinje cells are marked specifically.

It localises to the nucleus. The protein resides in the chromosome. It is found in the PML body. The protein localises to the telomere. In terms of biological role, component of the MRN complex, which plays a central role in double-strand break (DSB) repair, DNA recombination, maintenance of telomere integrity and meiosis. The MRN complex is involved in the repair of DNA double-strand breaks (DSBs) via homologous recombination (HR), an error-free mechanism which primarily occurs during S and G2 phases. The complex (1) mediates the end resection of damaged DNA, which generates proper single-stranded DNA, a key initial steps in HR, and is (2) required for the recruitment of other repair factors and efficient activation of ATM and ATR upon DNA damage. The MRN complex possesses single-strand endonuclease activity and double-strand-specific 3'-5' exonuclease activity, which are provided by MRE11, to initiate end resection, which is required for single-strand invasion and recombination. Within the MRN complex, NBN acts as a protein-protein adapter, which specifically recognizes and binds phosphorylated proteins, promoting their recruitment to DNA damage sites. Recruits MRE11 and RAD50 components of the MRN complex to DSBs in response to DNA damage. Promotes the recruitment of PI3/PI4-kinase family members ATM, ATR, and probably DNA-PKcs to the DNA damage sites, activating their functions. Mediates the recruitment of phosphorylated RBBP8/CtIP to DSBs, leading to cooperation between the MRN complex and RBBP8/CtIP to initiate end resection. RBBP8/CtIP specifically promotes the endonuclease activity of the MRN complex to clear DNA ends containing protein adducts. The MRN complex is also required for the processing of R-loops. NBN also functions in telomere length maintenance via its interaction with TERF2: interaction with TERF2 during G1 phase preventing recruitment of DCLRE1B/Apollo to telomeres. NBN also promotes DNA repair choice at dysfunctional telomeres: NBN phosphorylation by CDK2 promotes non-homologous end joining repair at telomeres, while unphosphorylated NBN promotes microhomology-mediated end-joining (MMEJ) repair. Enhances AKT1 phosphorylation possibly by association with the mTORC2 complex. The protein is Nibrin of Mus musculus (Mouse).